A 109-amino-acid polypeptide reads, in one-letter code: uncharacterized protein (109 aa).

This is an uncharacterized protein from Enterobacteriaceae (Bacteriophage P2).